The primary structure comprises 283 residues: Pantothenate synthetase (283 aa).

ATP is bound at residue 30 to 37 (MGNLHNGH). H37 serves as the catalytic Proton donor. Residue Q61 participates in (R)-pantoate binding. Q61 is a beta-alanine binding site. Position 149–152 (149–152 (GEKD)) interacts with ATP. Q155 contributes to the (R)-pantoate binding site. Residue 186–189 (LSSR) coordinates ATP.

It belongs to the pantothenate synthetase family. In terms of assembly, homodimer.

It is found in the cytoplasm. The catalysed reaction is (R)-pantoate + beta-alanine + ATP = (R)-pantothenate + AMP + diphosphate + H(+). It functions in the pathway cofactor biosynthesis; (R)-pantothenate biosynthesis; (R)-pantothenate from (R)-pantoate and beta-alanine: step 1/1. Functionally, catalyzes the condensation of pantoate with beta-alanine in an ATP-dependent reaction via a pantoyl-adenylate intermediate. The polypeptide is Pantothenate synthetase (Shigella flexneri serotype 5b (strain 8401)).